A 177-amino-acid polypeptide reads, in one-letter code: 2-C-methyl-D-erythritol 2,4-cyclodiphosphate synthase (177 aa).

A divalent metal cation-binding residues include Asp8 and His10. 4-CDP-2-C-methyl-D-erythritol 2-phosphate-binding positions include 8–10 (DVH) and 34–35 (HS). Residue His42 participates in a divalent metal cation binding. Residues 56–58 (DIG), 61–65 (FPDTD), 132–135 (TTEE), Phe139, and Arg142 each bind 4-CDP-2-C-methyl-D-erythritol 2-phosphate.

This sequence belongs to the IspF family. Homotrimer. It depends on a divalent metal cation as a cofactor.

The enzyme catalyses 4-CDP-2-C-methyl-D-erythritol 2-phosphate = 2-C-methyl-D-erythritol 2,4-cyclic diphosphate + CMP. Its pathway is isoprenoid biosynthesis; isopentenyl diphosphate biosynthesis via DXP pathway; isopentenyl diphosphate from 1-deoxy-D-xylulose 5-phosphate: step 4/6. Functionally, involved in the biosynthesis of isopentenyl diphosphate (IPP) and dimethylallyl diphosphate (DMAPP), two major building blocks of isoprenoid compounds. Catalyzes the conversion of 4-diphosphocytidyl-2-C-methyl-D-erythritol 2-phosphate (CDP-ME2P) to 2-C-methyl-D-erythritol 2,4-cyclodiphosphate (ME-CPP) with a corresponding release of cytidine 5-monophosphate (CMP). The sequence is that of 2-C-methyl-D-erythritol 2,4-cyclodiphosphate synthase from Agathobacter rectalis (strain ATCC 33656 / DSM 3377 / JCM 17463 / KCTC 5835 / VPI 0990) (Eubacterium rectale).